We begin with the raw amino-acid sequence, 467 residues long: Actinorhodin polyketide putative beta-ketoacyl synthase 1 (467 aa).

A disordered region spans residues 1 to 35; it reads MPLDAAPVDPASRGPVSAFEPPSSHGADDDDDHRT. In terms of domain architecture, Ketosynthase family 3 (KS3) spans 45 to 459; it reads KRRVVITGVG…GFQSAMVLRD (415 aa). Active-site for beta-ketoacyl synthase activity residues include Cys212, His352, and His389.

The protein belongs to the thiolase-like superfamily. Beta-ketoacyl-ACP synthases family.

Its pathway is antibiotic biosynthesis; actinorhodin biosynthesis. The polypeptide is Actinorhodin polyketide putative beta-ketoacyl synthase 1 (Streptomyces coelicolor (strain ATCC BAA-471 / A3(2) / M145)).